The chain runs to 142 residues: Large ribosomal subunit protein uL11 (142 aa).

The protein belongs to the universal ribosomal protein uL11 family. Part of the ribosomal stalk of the 50S ribosomal subunit. Interacts with L10 and the large rRNA to form the base of the stalk. L10 forms an elongated spine to which L12 dimers bind in a sequential fashion forming a multimeric L10(L12)X complex. Post-translationally, one or more lysine residues are methylated.

Functionally, forms part of the ribosomal stalk which helps the ribosome interact with GTP-bound translation factors. In Bradyrhizobium sp. (strain BTAi1 / ATCC BAA-1182), this protein is Large ribosomal subunit protein uL11.